The chain runs to 257 residues: Nickel import system ATP-binding protein NikD (257 aa).

Residues 4–245 (IDIQNLTIKN…HLHPYTERLI (242 aa)) enclose the ABC transporter domain. Position 37-44 (37-44 (GESGAGKS)) interacts with ATP.

Belongs to the ABC transporter superfamily. In terms of assembly, the complex is composed of two ATP-binding proteins (NikD and NikE), two transmembrane proteins (NikB and NikC) and a solute-binding protein (NikA).

The protein resides in the cell membrane. The enzyme catalyses Ni(2+)(out) + ATP + H2O = Ni(2+)(in) + ADP + phosphate + H(+). In terms of biological role, part of the ABC transporter complex NikABCDE (Opp2) involved in nickel import. Probably responsible for energy coupling to the transport system. This is Nickel import system ATP-binding protein NikD from Staphylococcus aureus (strain MW2).